Consider the following 24-residue polypeptide: Positive regulator of RepFIC repA1 expression (24 aa).

The sequence is that of Positive regulator of RepFIC repA1 expression (repL) from Escherichia coli.